Consider the following 122-residue polypeptide: Large ribosomal subunit protein uL14 (122 aa).

The protein belongs to the universal ribosomal protein uL14 family. Part of the 50S ribosomal subunit. Forms a cluster with proteins L3 and L19. In the 70S ribosome, L14 and L19 interact and together make contacts with the 16S rRNA in bridges B5 and B8.

Binds to 23S rRNA. Forms part of two intersubunit bridges in the 70S ribosome. The sequence is that of Large ribosomal subunit protein uL14 from Exiguobacterium sp. (strain ATCC BAA-1283 / AT1b).